The chain runs to 419 residues: Protein indeterminate-domain 14 (419 aa).

Residues 1–58 (MIDYERSNTTKNINTHHHNPPPSSSSSDLLPDGNGTAVTQKRKRRPAGTPDPEAEVVS) form a disordered region. 3 consecutive C2H2-type zinc fingers follow at residues 70 to 92 (YVCE…RRRH), 112 to 142 (YVCP…RRKH), and 148 to 175 (WICE…TRGH). Residues Cys150, Cys153, His166, Cys170, Cys177, Cys179, His192, and Cys196 each coordinate Zn(2+). The segment at 175–198 (HSCDCGRVFSRVESFIEHQDTCTV) adopts a CCHC-type 2; atypical zinc-finger fold. The interval 185 to 197 (RVESFIEHQDTCT) is SHR-binding. Disordered regions lie at residues 200–259 (RSQP…PSTL) and 298–318 (SEVE…EEAR). Composition is skewed to low complexity over residues 213–230 (QHTT…NNEN) and 246–259 (RRQS…PSTL). The stretch at 313-349 (EREEARRETKRQIEIAELEFAEAKRIRQHARAELHKA) forms a coiled coil.

In terms of assembly, homo- and heterodimer of IDD14alpha and IDD14beta. Expressed in cotyledons and the vasculature of reosette leaves. Weak expression in hypocotyls and floral organs, but not detected in roots and inflorescence stems.

The protein localises to the nucleus. Its function is as follows. Transcription factor regulating starch metabolism by binding directly to the promoter of QQS. The IDD14beta isoform attenuates the transcription factor activity by competitively forming heterodimers with reduced DNA-binding capacity. Regulates lateral organ morphogenesis and gravitropic responses. Has a redundant role with IDD16 in directing leaf and floral organ morphogenesis. Involved in the establishment of auxin gradients through the regulation of auxin biosynthesis and transport. The polypeptide is Protein indeterminate-domain 14 (Arabidopsis thaliana (Mouse-ear cress)).